Reading from the N-terminus, the 301-residue chain is Phosphoribosylaminoimidazole-succinocarboxamide synthase (301 aa).

This sequence belongs to the SAICAR synthetase family.

The enzyme catalyses 5-amino-1-(5-phospho-D-ribosyl)imidazole-4-carboxylate + L-aspartate + ATP = (2S)-2-[5-amino-1-(5-phospho-beta-D-ribosyl)imidazole-4-carboxamido]succinate + ADP + phosphate + 2 H(+). It functions in the pathway purine metabolism; IMP biosynthesis via de novo pathway; 5-amino-1-(5-phospho-D-ribosyl)imidazole-4-carboxamide from 5-amino-1-(5-phospho-D-ribosyl)imidazole-4-carboxylate: step 1/2. The protein is Phosphoribosylaminoimidazole-succinocarboxamide synthase (ADE1) of Cyberlindnera jadinii (Torula yeast).